We begin with the raw amino-acid sequence, 515 residues long: WUSCHEL-related homeobox 12 (515 aa).

2 stretches are compositionally biased toward polar residues: residues 23-32 and 44-57; these read QQQPDMNGNG and TAAT…SLLS. 3 disordered regions span residues 23–76, 130–156, and 176–195; these read QQQP…WNPR, NKLR…PPST, and LLAA…GSSK. Residues 62 to 71 are compositionally biased toward basic and acidic residues; sequence EGTRNPEPKP. The homeobox; WUS-type DNA-binding region spans 68 to 132; sequence EPKPRWNPRP…NRKSRTKNKL (65 aa). The segment covering 130–143 has biased composition (basic residues); it reads NKLRAAGHHHHHGR. Composition is skewed to low complexity over residues 144–156 and 177–195; these read AAAL…PPST and LAAT…GSSK.

Belongs to the WUS homeobox family.

It is found in the nucleus. In terms of biological role, transcription factor which may be involved in developmental processes. This chain is WUSCHEL-related homeobox 12 (WOX12), found in Oryza sativa subsp. japonica (Rice).